A 561-amino-acid chain; its full sequence is Sesquiterpene synthase TPS2 (561 aa).

A disordered region spans residues 6–26 (ANGHSDVPSTQPPIGKQKKEI). (2E,6E)-farnesyl diphosphate-binding residues include Arg-277, Asp-314, Asp-318, Arg-455, and Asp-458. The Mg(2+) site is built by Asp-314 and Asp-318. The DDXXD motif motif lies at 314 to 318 (DDTYD). Residues Asp-458, Ser-462, and Glu-466 each coordinate Mg(2+).

Belongs to the terpene synthase family. Tpsa subfamily. In terms of assembly, monomer. The cofactor is Mg(2+).

The protein resides in the cytoplasm. It catalyses the reaction (2E,6E)-farnesyl diphosphate = beta-ylangene + diphosphate. The enzyme catalyses (2E,6E)-farnesyl diphosphate = beta-copaene + diphosphate. It carries out the reaction (2E,6E)-farnesyl diphosphate = beta-cubebene + diphosphate. The protein operates within secondary metabolite biosynthesis; terpenoid biosynthesis. In terms of biological role, sesquiterpene synthase involved in the biosynthesis of volatile organic compounds. Mediates the conversion of (2E,6E)-farnesyl diphosphate (FPP) into beta-ylangene, beta-copaene and beta-cubebene. Does not use (2E)-geranyl diphosphate (GPP) as substrate. The sequence is that of Sesquiterpene synthase TPS2 from Cananga odorata (Ylang-ylang tree).